The primary structure comprises 1381 residues: Hepatocyte growth factor receptor (1381 aa).

The N-terminal stretch at 1-24 is a signal peptide; it reads MKAPAVLVPGILVLLFTLVQRSNG. Topologically, residues 25-932 are extracellular; sequence ECKEALAKSE…VIVQPDQNFT (908 aa). The region spanning 27–515 is the Sema domain; sequence KEALAKSEMN…TGKKITKIPL (489 aa). Asparagine 45 carries an N-linked (GlcNAc...) asparagine glycan. 4 disulfide bridges follow: cysteine 95–cysteine 101, cysteine 98–cysteine 160, cysteine 133–cysteine 141, and cysteine 172–cysteine 175. N-linked (GlcNAc...) asparagine glycosylation occurs at asparagine 106. Asparagine 149 carries an N-linked (GlcNAc...) asparagine glycan. N-linked (GlcNAc...) asparagine glycosylation is present at asparagine 202. 2 disulfides stabilise this stretch: cysteine 298/cysteine 363 and cysteine 385/cysteine 397. N-linked (GlcNAc...) asparagine glycosylation is found at asparagine 399 and asparagine 405. Cystine bridges form between cysteine 520/cysteine 538, cysteine 526/cysteine 561, cysteine 529/cysteine 545, and cysteine 541/cysteine 551. IPT/TIG domains follow at residues 563 to 655, 657 to 739, and 742 to 836; these read PAIY…FSYV, PIIT…FSYR, and PIVY…LIYV. The O-linked (Man) threonine glycan is linked to threonine 582. N-linked (GlcNAc...) asparagine glycans are attached at residues asparagine 607 and asparagine 635. O-linked (Man) threonine glycosylation is found at threonine 676 and threonine 761. Residues asparagine 785, asparagine 879, and asparagine 930 are each glycosylated (N-linked (GlcNAc...) asparagine). Residues 933-955 form a helical membrane-spanning segment; sequence GLIAGVVSISIALLLLLGLFLWL. Residues 956-1381 are Cytoplasmic-facing; the sequence is KKRKQIKDLG…EDNADDEVDT (426 aa). Serine 966 is modified (phosphoserine). Threonine 977 bears the Phosphothreonine mark. Residues serine 990, serine 997, and serine 1000 each carry the phosphoserine modification. A Phosphotyrosine modification is found at tyrosine 1003. The 268-residue stretch at 1078–1345 folds into the Protein kinase domain; sequence VHFNEVIGRG…RISAIFSTFI (268 aa). ATP contacts are provided by residues 1084-1092 and lysine 1110; that span reads IGRGHFGCV. Aspartate 1204 acts as the Proton acceptor in catalysis. The segment at 1212 to 1381 is interaction with RANBP9; that stretch reads LDEKFTVKVA…EDNADDEVDT (170 aa). Tyrosine 1230 is modified (phosphotyrosine). 2 positions are modified to phosphotyrosine; by autocatalysis: tyrosine 1234 and tyrosine 1235. At threonine 1289 the chain carries Phosphothreonine. The tract at residues 1320–1359 is interaction with MUC20; the sequence is WHPKAEMRPSFSELVSRISAIFSTFIGEHYVHVNATYVNV. Tyrosine 1349 and tyrosine 1356 each carry phosphotyrosine; by autocatalysis. The residue at position 1365 (tyrosine 1365) is a Phosphotyrosine.

This sequence belongs to the protein kinase superfamily. Tyr protein kinase family. As to quaternary structure, heterodimer made of an alpha chain (50 kDa) and a beta chain (145 kDa) which are disulfide linked. Binds PLXNB1. Interacts when phosphorylated with downstream effectors including STAT3, PIK3R1, SRC, PCLG1, GRB2 and GAB1. Interacts with SPSB1, SPSB2 and SPSB4. Interacts with INPP5D/SHIP1. When phosphorylated at Tyr-1356, interacts with INPPL1/SHIP2. Interacts with RANBP9 and RANBP10, as well as SPSB1, SPSB2, SPSB3 and SPSB4. SPSB1 binding occurs in the presence and in the absence of HGF, however HGF treatment has a positive effect on this interaction. Interacts with MUC20; prevents interaction with GRB2 and suppresses hepatocyte growth factor-induced cell proliferation. Interacts with GRB10. Interacts with PTPN1 and PTPN2. Interacts with HSP90AA1 and HSP90AB1; the interaction suppresses MET kinase activity. Interacts with tensin TNS3. Interacts (when phosphorylated) with tensin TNS4 (via SH2 domain); the interaction increases MET protein stability by inhibiting MET endocytosis and subsequent lysosomal degradation. Autophosphorylated in response to ligand binding on Tyr-1234 and Tyr-1235 in the kinase domain leading to further phosphorylation of Tyr-1349 and Tyr-1356 in the C-terminal multifunctional docking site. Dephosphorylated by PTPRJ at Tyr-1349 and Tyr-1365. Dephosphorylated by PTPN1 and PTPN2. Post-translationally, ubiquitinated. Ubiquitination by CBL regulates the receptor stability and activity through proteasomal degradation. In terms of processing, O-mannosylation of IPT/TIG domains by TMEM260 is required for protein maturation. O-mannosylated residues are composed of single mannose glycans that are not elongated or modified.

It is found in the membrane. It carries out the reaction L-tyrosyl-[protein] + ATP = O-phospho-L-tyrosyl-[protein] + ADP + H(+). In its inactive state, the C-terminal tail interacts with the catalytic domain and inhibits the kinase activity. Upon ligand binding, the C-terminal tail is displaced and becomes phosphorylated, thus increasing the kinase activity. Its function is as follows. Receptor tyrosine kinase that transduces signals from the extracellular matrix into the cytoplasm by binding to hepatocyte growth factor/HGF ligand. Regulates many physiological processes including proliferation, scattering, morphogenesis and survival. Ligand binding at the cell surface induces autophosphorylation of MET on its intracellular domain that provides docking sites for downstream signaling molecules. Following activation by ligand, interacts with the PI3-kinase subunit PIK3R1, PLCG1, SRC, GRB2, STAT3 or the adapter GAB1. Recruitment of these downstream effectors by MET leads to the activation of several signaling cascades including the RAS-ERK, PI3 kinase-AKT, or PLCgamma-PKC. The RAS-ERK activation is associated with the morphogenetic effects while PI3K/AKT coordinates prosurvival effects. During embryonic development, MET signaling plays a role in gastrulation, development and migration of muscles and neuronal precursors, angiogenesis and kidney formation. In adults, participates in wound healing as well as organ regeneration and tissue remodeling. Also promotes differentiation and proliferation of hematopoietic cells. The polypeptide is Hepatocyte growth factor receptor (MET) (Papio anubis (Olive baboon)).